The chain runs to 440 residues: Beta-1,3-galactosyl-O-glycosyl-glycoprotein beta-1,6-N-acetylglucosaminyltransferase (440 aa).

The Cytoplasmic portion of the chain corresponds to 1 to 9 (MKMAGWKKK). A helical; Signal-anchor for type II membrane protein transmembrane segment spans residues 10–30 (LCPGHHLWALGCYMLLAVVSL). The Lumenal portion of the chain corresponds to 31-440 (RLSLRFKCDV…RHKAIYGTEL (410 aa)). Residues N72 and N108 are each glycosylated (N-linked (GlcNAc...) asparagine; by host). Intrachain disulfides connect C73–C230, C164–C384, C185–C212, and C393–C425.

The protein belongs to the glycosyltransferase 14 family.

It localises to the host Golgi apparatus membrane. The catalysed reaction is a 3-O-[beta-D-galactosyl-(1-&gt;3)-N-acetyl-alpha-D-galactosaminyl]-L-seryl-[protein] + UDP-N-acetyl-alpha-D-glucosamine = 3-O-{beta-D-galactosyl-(1-&gt;3)-[N-acetyl-beta-D-glucosaminyl-(1-&gt;6)]-N-acetyl-alpha-D-galactosaminyl}-L-seryl-[protein] + UDP + H(+). It catalyses the reaction a 3-O-[beta-D-galactosyl-(1-&gt;3)-N-acetyl-alpha-D-galactosaminyl]-L-threonyl-[protein] + UDP-N-acetyl-alpha-D-glucosamine = a 3-O-{beta-D-galactosyl-(1-&gt;3)-[N-acetyl-beta-D-glucosaminyl-(1-&gt;6)]-N-acetyl-alpha-D-galactosaminyl}-L-threonyl-[protein] + UDP + H(+). The enzyme catalyses a beta-D-Gal-(1-&gt;4)-beta-D-GlcNAc-(1-&gt;3)-beta-D-Gal-(1-&gt;4)-beta-D-GlcNAc derivative + UDP-N-acetyl-alpha-D-glucosamine = a beta-D-Gal-(1-&gt;4)-beta-D-GlcNAc-(1-&gt;3)-[beta-D-GlcNAc-(1-&gt;6)]-beta-D-Gal-(1-&gt;4)-N-acetyl-beta-D-glucosaminyl derivative + UDP + H(+). It carries out the reaction 3-O-[N-acetyl-beta-D-glucosaminyl-(1-&gt;3)-N-acetyl-alpha-D-galactosaminyl]-L-seryl-[protein] + UDP-N-acetyl-alpha-D-glucosamine = 3-O-[N-acetyl-beta-D-glucosaminyl-(1-&gt;3)-[N-acetyl-beta-D-glucosaminyl-(1-&gt;6)]-N-acetyl-alpha-D-galactosaminyl]-L-seryl-[protein] + UDP + H(+). The catalysed reaction is a 3-O-[N-acetyl-beta-D-glucosaminyl-(1-&gt;3)-N-acetyl-alpha-D-galactosaminyl]-L-threonyl-[protein] + UDP-N-acetyl-alpha-D-glucosamine = 3-O-[N-acetyl-beta-D-glucosaminyl-(1-&gt;3)-[N-acetyl-beta-D-glucosaminyl-(1-&gt;6)]-N-acetyl-alpha-D-galactosaminyl]-L-threonyl-[protein] + UDP + H(+). The protein operates within protein modification; protein glycosylation. Its function is as follows. Non-essential glycosyltransferase that can synthesize all known mucin beta 6 N-acetylglucosaminides. Mediates core 2 and core 4 O-glycan branching, 2 important steps in mucin-type biosynthesis. Has also I-branching enzyme activity by converting linear into branched poly-N-acetyllactosaminoglycans. Contributes to the post-translational modifications of structural proteins. The chain is Beta-1,3-galactosyl-O-glycosyl-glycoprotein beta-1,6-N-acetylglucosaminyltransferase (Bo17) from Bovine herpesvirus 4 (strain V. test) (BoHV-4).